Here is a 381-residue protein sequence, read N- to C-terminus: tRNA pseudouridine synthase D (381 aa).

Residue D81 is the Nucleophile of the active site. Positions G160 to V335 constitute a TRUD domain.

It belongs to the pseudouridine synthase TruD family.

It catalyses the reaction uridine(13) in tRNA = pseudouridine(13) in tRNA. Functionally, responsible for synthesis of pseudouridine from uracil-13 in transfer RNAs. The sequence is that of tRNA pseudouridine synthase D from Helicobacter pylori (strain G27).